The chain runs to 398 residues: MNSLDFDRKPEDTRVVVAMSGGVDSSVVAGLLKREGYDVLGITLQLYDHGAAVHRAGSCCAGQDIDDARRVCETIGIPHYVLDYEARFRETVINPFAESYIAGETPIPCVACNQTVKFADLLATAKELGADALATGHYIRSRPSPMPRYPGQRALYRPADADRDQSYFLFATTQEQIDYLRFPLGGLPKSETRALAEEMGLVVAKKADSQDICFVPQGKYSDIVSKLKPNAALAGEIVHLDGRVLGAHEGILHYTIGQRRGIGVATGEPLYVVYLDARSRRVVVGPKEALETRRVYLRDVNWLGDEELEAAARSGFECFAKVRSTRRPAPAVLSCDAEGLYVELVEGEAGVAPGQACALYSGIGEDARVYGGGFIRRSEREPAAEAALKALLQAPAAA.

ATP-binding positions include 18-25 (AMSGGVDS) and Leu44. Cys112 acts as the Nucleophile in catalysis. A disulfide bridge connects residues Cys112 and Cys213. Gly136 is an ATP binding site. The interaction with tRNA stretch occupies residues 163-165 (RDQ). Cys213 acts as the Cysteine persulfide intermediate in catalysis.

This sequence belongs to the MnmA/TRMU family.

It is found in the cytoplasm. It carries out the reaction S-sulfanyl-L-cysteinyl-[protein] + uridine(34) in tRNA + AH2 + ATP = 2-thiouridine(34) in tRNA + L-cysteinyl-[protein] + A + AMP + diphosphate + H(+). Functionally, catalyzes the 2-thiolation of uridine at the wobble position (U34) of tRNA, leading to the formation of s(2)U34. This is tRNA-specific 2-thiouridylase MnmA from Sinorhizobium medicae (strain WSM419) (Ensifer medicae).